We begin with the raw amino-acid sequence, 362 residues long: Chorismate synthase (362 aa).

Position 47 (Arg-47) interacts with NADP(+). FMN contacts are provided by residues 124 to 126, Gly-286, 301 to 305, and Arg-327; these read RAS and KPTAT.

Belongs to the chorismate synthase family. As to quaternary structure, homotetramer. Requires FMNH2 as cofactor.

It carries out the reaction 5-O-(1-carboxyvinyl)-3-phosphoshikimate = chorismate + phosphate. It participates in metabolic intermediate biosynthesis; chorismate biosynthesis; chorismate from D-erythrose 4-phosphate and phosphoenolpyruvate: step 7/7. Catalyzes the anti-1,4-elimination of the C-3 phosphate and the C-6 proR hydrogen from 5-enolpyruvylshikimate-3-phosphate (EPSP) to yield chorismate, which is the branch point compound that serves as the starting substrate for the three terminal pathways of aromatic amino acid biosynthesis. This reaction introduces a second double bond into the aromatic ring system. The chain is Chorismate synthase from Synechococcus sp. (strain WH7803).